The primary structure comprises 215 residues: UPF0502 protein YceH (215 aa).

Lys80 is subject to N6-acetyllysine.

Belongs to the UPF0502 family.

The chain is UPF0502 protein YceH from Shigella flexneri serotype 5b (strain 8401).